Reading from the N-terminus, the 162-residue chain is Regulatory protein RecX (162 aa).

The protein belongs to the RecX family.

It is found in the cytoplasm. Functionally, modulates RecA activity. This is Regulatory protein RecX from Xanthomonas axonopodis pv. citri (strain 306).